We begin with the raw amino-acid sequence, 64 residues long: Small ribosomal subunit protein bS21 (64 aa).

It belongs to the bacterial ribosomal protein bS21 family.

The sequence is that of Small ribosomal subunit protein bS21 from Amoebophilus asiaticus (strain 5a2).